The following is a 1767-amino-acid chain: Trans-Golgi network-localized SYP41-interacting protein 1 (1767 aa).

Residues methionine 1–aspartate 72 form a disordered region. The Cytoplasmic segment spans residues methionine 1–arginine 1748. Residues isoleucine 16–proline 32 are compositionally biased toward acidic residues. Coiled coils occupy residues leucine 276–alanine 436, valine 493–leucine 516, lysine 570–threonine 590, valine 684–serine 805, and isoleucine 845–lysine 1082. Residues aspartate 1177–serine 1190 show a composition bias toward polar residues. The interval aspartate 1177–serine 1198 is disordered. Coiled-coil stretches lie at residues asparagine 1251 to asparagine 1310, isoleucine 1362 to lysine 1424, leucine 1522 to glutamate 1542, and leucine 1603 to glutamine 1630. Residues leucine 1749–isoleucine 1766 traverse the membrane as a helical; Anchor for type IV membrane protein segment. Position 1767 (leucine 1767) is a topological domain, vesicular.

As to quaternary structure, interacts with SYP41. Expressed ubiquitously in roots, leaves and flowers, and, to a lower extent, in stems.

The protein localises to the golgi apparatus. Its subcellular location is the trans-Golgi network membrane. Tethering factor involved in vesicle fusion at the trans-Golgi network (TGN) thus being required for efficient protein trafficking to the vacuole. Implicated in resistance to salt and osmotic stresses. Modulates the cell morphology (e.g. epidermal cell file rotation (CFR) and cell expansion) in mature regions of roots and the base of hypocotyls as well as root skewing, a process leading to root movement within the soil in order to maximize anchorage and nutrient acquisition, probably by regulating microtubule stabilization independently of their orientation. The polypeptide is Trans-Golgi network-localized SYP41-interacting protein 1 (Arabidopsis thaliana (Mouse-ear cress)).